Consider the following 1565-residue polypeptide: MKVKKTYGFRKSKISKTLCGAVLGTVAAVSVAGQKVFADETTTTSDVDTKVVGTQTGNPATNLPEAQGSASKEAEQSQTKLERQMVHTIEVPKTDLDQAAKDAKSAGVNVVQDADVNKGTVKTPEEAVQKETEIKEDYTKQAEDIKKTTDQYKSDVAAHEAEVAKIKAKNQATKEQYEKDMAAHKAEVERINAANAASKTAYEAKLAQYQADLAAVQKTNAANQAAYQKALAAYQAELKRVQEANAAAKAAYDTAVAANNAKNTEIAAANEEIRKRNATAKAEYETKLAQYQAELKRVQEANAANEADYQAKLTAYQTELARVQKANADAKATYEAAVAANNAKNAALTAENTAIKQRNENAKATYEAALKQYEADLAAVKKANAANEADYQAKLTAYQTELARVQKANADAKAAYEAAVAANNAANAALTAENTAIKKRNADAKADYEAKLAKYQADLAKYQKDLADYPVKLKAYEDEQTSIKAALAELEKHKNEDGNLTEPSAQNLVYDLEPNANLSLTTDGKFLKASAVDDAFSKSTSKAKYDQKILQLDDLDITNLEQSNDVASSMELYGNFGDKAGWSTTVSNNSQVKWGSVLLERGQSATATYTNLQNSYYNGKKISKIVYKYTVDPKSKFQGQKVWLGIFTDPTLGVFASAYTGQVEKNTSIFIKNEFTFYHEDEKPINFDNALLSVTSLNREHNSIEMAKDYSGKFVKISGSSIGEKNGMIYATDTLNFKQGEGGSRWTMYKNSQAGSGWDSSDAPNSWYGAGAIKMSGPNNHVTVGATSATNVMPVSDMPVVPGKDNTDGKKPNIWYSLNGKIRAVNVPKVTKEKPTPPVKPTAPTKPTYETEKPLKPAPVAPNYEKEPTPPTRTPDQAEPNKPTPPTYETEKPLEPAPVEPSYEAEPTPPTRTPDQAEPNKPTPPTYETEKPLEPAPVEPSYEAEPTPPTPTPDQPEPNKPVEPTYEVIPTPPTDPVYQDLPTPPSDPTVHFHYFKLAVQPQVNKEIRNNNDINIDRTLVAKQSVVKFQLKTADLPAGRDETTSFVLVDPLPSGYQFNPEATKAASPGFDVTYDNATNTVTFKATAATLATFNADLTKSVATIYPTVVGQVLNDGATYKNNFTLTVNDAYGIKSNVVRVTTPGKPNDPDNPNNNYIKPTKVNKNENGVVIDGKTVLAGSTNYYELTWDLDQYKNDRSSADTIQKGFYYVDDYPEEALELRQDLVKITDANGNEVTGVSVDNYTNLEAAPQEIRDVLSKAGIRPKGAFQIFRADNPREFYDTYVKTGIDLKIVSPMVVKKQMGQTGGSYENQAYQIDFGNGYASNIVINNVPKINPKKDVTLTLDPADTNNVDGQTIPLNTVFNYRLIGGIIPANHSEELFEYNFYDDYDQTGDHYTGQYKVFAKVDITLKNGVIIKSGTELTQYTTAEVDTTKGAITIKFKEAFLRSVSIDSAFQAESYIQMKRIAVGTFENTYINTVNGVTYSSNTVKTTTPEDPADPTDPQDPSSPRTSTVIIYKPQSTAYQPSSVQETLPNTGVTNNAYMPLLGIIGLVTSFSLLGLKAKKD.

An N-terminal signal peptide occupies residues 1–38; that stretch reads MKVKKTYGFRKSKISKTLCGAVLGTVAAVSVAGQKVFA. Residues 42-54 show a composition bias toward low complexity; the sequence is TTTSDVDTKVVGT. Residues 42–81 form a disordered region; it reads TTTSDVDTKVVGTQTGNPATNLPEAQGSASKEAEQSQTKL. Basic and acidic residues predominate over residues 72-81; sequence KEAEQSQTKL. 4 Ag I/II A repeats span residues 146-220, 221-302, 303-384, and 385-466; these read KKTT…QKTN, AANQ…QEAN, AANE…KKAN, and AANE…QKDL. The interval 203-448 is heptad repeats of Y-[EQ]-X-X-L-A-X; sequence EAKLAQYQAD…KRNADAKADY (246 aa). The segment at 461 to 834 is V-region (lectin-like); it reads KYQKDLADYP…VNVPKVTKEK (374 aa). Disordered regions lie at residues 827-985 and 1486-1511; these read VPKV…PTPP and NTVKTTTPEDPADPTDPQDPSSPRTS. A P1 repeat occupies 848 to 887; the sequence is TYETEKPLKPAPVAPNYEKEPTPPTRTPDQAEPNKPTPPT. A P2 repeat occupies 888 to 926; sequence YETEKPLEPAPVEPSYEAEPTPPTRTPDQAEPNKPTPPT. The stretch at 927–964 is one P3 repeat; it reads YETEKPLEPAPVEPSYEAEPTPPTPTPDQPEPNKPVEP. A compositionally biased stretch (pro residues) spans 946-961; sequence PTPPTPTPDQPEPNKP. The short motif at 1532-1536 is the LPXTG sorting signal element; that stretch reads LPNTG. The residue at position 1535 (Thr1535) is a Pentaglycyl murein peptidoglycan amidated threonine. A propeptide spans 1536–1565 (removed by sortase); sequence GVTNNAYMPLLGIIGLVTSFSLLGLKAKKD.

Belongs to the antigen I/II family.

The protein resides in the secreted. The protein localises to the cell wall. Surface protein antigen implicated in dental caries. The polypeptide is Major cell-surface adhesin PAc (Streptococcus mutans).